The sequence spans 331 residues: Ribose-phosphate pyrophosphokinase (331 aa).

55–57 (DGE) contributes to the ATP binding site. Positions 148 and 187 each coordinate Mg(2+). The active site involves K211. D-ribose 5-phosphate contacts are provided by residues R213, D237, and 241 to 245 (DTGGT).

It belongs to the ribose-phosphate pyrophosphokinase family. Class I subfamily. Homohexamer. Mg(2+) serves as cofactor.

It localises to the cytoplasm. It catalyses the reaction D-ribose 5-phosphate + ATP = 5-phospho-alpha-D-ribose 1-diphosphate + AMP + H(+). It functions in the pathway metabolic intermediate biosynthesis; 5-phospho-alpha-D-ribose 1-diphosphate biosynthesis; 5-phospho-alpha-D-ribose 1-diphosphate from D-ribose 5-phosphate (route I): step 1/1. In terms of biological role, involved in the biosynthesis of the central metabolite phospho-alpha-D-ribosyl-1-pyrophosphate (PRPP) via the transfer of pyrophosphoryl group from ATP to 1-hydroxyl of ribose-5-phosphate (Rib-5-P). The chain is Ribose-phosphate pyrophosphokinase from Parasynechococcus marenigrum (strain WH8102).